The following is a 424-amino-acid chain: Serine--tRNA ligase (424 aa).

Thr-230–Glu-232 is an L-serine binding site. Arg-261–Glu-263 serves as a coordination point for ATP. Residue Glu-284 coordinates L-serine. Residue Glu-348–Ser-351 participates in ATP binding. Ser-384 contacts L-serine.

Belongs to the class-II aminoacyl-tRNA synthetase family. Type-1 seryl-tRNA synthetase subfamily. As to quaternary structure, homodimer. The tRNA molecule binds across the dimer.

It is found in the cytoplasm. It catalyses the reaction tRNA(Ser) + L-serine + ATP = L-seryl-tRNA(Ser) + AMP + diphosphate + H(+). It carries out the reaction tRNA(Sec) + L-serine + ATP = L-seryl-tRNA(Sec) + AMP + diphosphate + H(+). The protein operates within aminoacyl-tRNA biosynthesis; selenocysteinyl-tRNA(Sec) biosynthesis; L-seryl-tRNA(Sec) from L-serine and tRNA(Sec): step 1/1. Catalyzes the attachment of serine to tRNA(Ser). Is also able to aminoacylate tRNA(Sec) with serine, to form the misacylated tRNA L-seryl-tRNA(Sec), which will be further converted into selenocysteinyl-tRNA(Sec). The polypeptide is Serine--tRNA ligase (Streptococcus pneumoniae serotype 2 (strain D39 / NCTC 7466)).